The following is a 281-amino-acid chain: 2-dehydro-3-deoxyphosphooctonate aldolase 1 (281 aa).

It belongs to the KdsA family.

It is found in the cytoplasm. The catalysed reaction is D-arabinose 5-phosphate + phosphoenolpyruvate + H2O = 3-deoxy-alpha-D-manno-2-octulosonate-8-phosphate + phosphate. The protein operates within carbohydrate biosynthesis; 3-deoxy-D-manno-octulosonate biosynthesis; 3-deoxy-D-manno-octulosonate from D-ribulose 5-phosphate: step 2/3. Its pathway is bacterial outer membrane biogenesis; lipopolysaccharide biosynthesis. The polypeptide is 2-dehydro-3-deoxyphosphooctonate aldolase 1 (kdsA1) (Pseudomonas putida (strain ATCC 47054 / DSM 6125 / CFBP 8728 / NCIMB 11950 / KT2440)).